Consider the following 388-residue polypeptide: Succinate--CoA ligase [ADP-forming] subunit beta (388 aa).

In terms of domain architecture, ATP-grasp spans 9-244 (KQLFARYGLP…PSQEDSREAH (236 aa)). Residues lysine 46, 53–55 (GRG), glutamate 99, threonine 102, and glutamate 107 each bind ATP. Asparagine 199 and aspartate 213 together coordinate Mg(2+). Residues asparagine 264 and 321-323 (GIV) each bind substrate.

Belongs to the succinate/malate CoA ligase beta subunit family. Heterotetramer of two alpha and two beta subunits. It depends on Mg(2+) as a cofactor.

It catalyses the reaction succinate + ATP + CoA = succinyl-CoA + ADP + phosphate. The enzyme catalyses GTP + succinate + CoA = succinyl-CoA + GDP + phosphate. The protein operates within carbohydrate metabolism; tricarboxylic acid cycle; succinate from succinyl-CoA (ligase route): step 1/1. Succinyl-CoA synthetase functions in the citric acid cycle (TCA), coupling the hydrolysis of succinyl-CoA to the synthesis of either ATP or GTP and thus represents the only step of substrate-level phosphorylation in the TCA. The beta subunit provides nucleotide specificity of the enzyme and binds the substrate succinate, while the binding sites for coenzyme A and phosphate are found in the alpha subunit. In Pectobacterium carotovorum subsp. carotovorum (strain PC1), this protein is Succinate--CoA ligase [ADP-forming] subunit beta.